The sequence spans 246 residues: Eukaryotic translation initiation factor 6 (246 aa).

Residues serine 174 and serine 175 each carry the phosphoserine; by CK1 modification.

The protein belongs to the eIF-6 family. As to quaternary structure, monomer. Associates with the 60S ribosomal subunit. Phosphorylation at Ser-174 and Ser-175 promotes nuclear export.

The protein localises to the cytoplasm. The protein resides in the nucleus. It is found in the nucleolus. In terms of biological role, binds to the 60S ribosomal subunit and prevents its association with the 40S ribosomal subunit to form the 80S initiation complex in the cytoplasm. Is also involved in ribosome biogenesis. Associates with pre-60S subunits in the nucleus and is involved in its nuclear export. The chain is Eukaryotic translation initiation factor 6 (tif-6) from Neurospora crassa (strain ATCC 24698 / 74-OR23-1A / CBS 708.71 / DSM 1257 / FGSC 987).